The primary structure comprises 178 residues: ATP-dependent protease subunit HslV (178 aa).

Thr-7 is a catalytic residue. Residues Gly-162, Cys-165, and Thr-168 each contribute to the Na(+) site.

It belongs to the peptidase T1B family. HslV subfamily. In terms of assembly, a double ring-shaped homohexamer of HslV is capped on each side by a ring-shaped HslU homohexamer. The assembly of the HslU/HslV complex is dependent on binding of ATP.

It is found in the cytoplasm. It catalyses the reaction ATP-dependent cleavage of peptide bonds with broad specificity.. Allosterically activated by HslU binding. In terms of biological role, protease subunit of a proteasome-like degradation complex believed to be a general protein degrading machinery. This Herminiimonas arsenicoxydans protein is ATP-dependent protease subunit HslV.